Reading from the N-terminus, the 449-residue chain is Serine/threonine-protein phosphatase 2A activator 2 (449 aa).

Disordered stretches follow at residues 1-72 (MDSS…DPST) and 378-416 (MSEQ…PTGW). Residues 54–69 (NPTPVPETPALPPRPD) show a composition bias toward pro residues. Acidic residues predominate over residues 389 to 403 (EENEEEGGEVEVYDD).

Belongs to the PTPA-type PPIase family.

It localises to the cytoplasm. It catalyses the reaction [protein]-peptidylproline (omega=180) = [protein]-peptidylproline (omega=0). PPIases accelerate the folding of proteins. It catalyzes the cis-trans isomerization of proline imidic peptide bonds in oligopeptides. Acts as a regulatory subunit for PP2A-like phosphatases modulating their activity or substrate specificity, probably by inducing a conformational change in the catalytic subunit, a direct target of the PPIase. Can reactivate inactive phosphatase PP2A-phosphatase methylesterase complexes (PP2Ai) in presence of ATP and Mg(2+) by dissociating the inactive form from the complex. The chain is Serine/threonine-protein phosphatase 2A activator 2 (rrd-2) from Neurospora crassa (strain ATCC 24698 / 74-OR23-1A / CBS 708.71 / DSM 1257 / FGSC 987).